Consider the following 510-residue polypeptide: Flavonoid 3',5'-hydroxylase (510 aa).

Cys-447 contacts heme.

Belongs to the cytochrome P450 family. It depends on heme as a cofactor.

The catalysed reaction is a 3',5'-unsubstituted flavanone + 2 reduced [NADPH--hemoprotein reductase] + 2 O2 = a 3',5'-dihydroxyflavanone + 2 oxidized [NADPH--hemoprotein reductase] + 2 H2O + 2 H(+). It functions in the pathway pigment biosynthesis; anthocyanin biosynthesis. Catalyzes the 3'5'-hydroxylation of naringenin and eriodictyol to form 5,7,3,'4',5'-pentahydroxyflavanone and 3',5'-hydroxylation of dihydrokaempferol and dihydroquercetin to form dihydromyricetin. The chain is Flavonoid 3',5'-hydroxylase (CYP75A7) from Eustoma exaltatum subsp. russellianum (Bluebells).